The primary structure comprises 258 residues: Indole-3-glycerol phosphate synthase 2 (258 aa).

This sequence belongs to the TrpC family.

It catalyses the reaction 1-(2-carboxyphenylamino)-1-deoxy-D-ribulose 5-phosphate + H(+) = (1S,2R)-1-C-(indol-3-yl)glycerol 3-phosphate + CO2 + H2O. The protein operates within amino-acid biosynthesis; L-tryptophan biosynthesis; L-tryptophan from chorismate: step 4/5. Functionally, the function of the second trp operon in S.coelicolor is to produce tryptophan for the biosynthesis of calcium-dependent antibiotic (CDA). This chain is Indole-3-glycerol phosphate synthase 2 (trpC2), found in Streptomyces coelicolor (strain ATCC BAA-471 / A3(2) / M145).